We begin with the raw amino-acid sequence, 312 residues long: tRNA-dihydrouridine(16) synthase (312 aa).

FMN-binding positions include 7 to 9 (PMQ) and glutamine 68. The Proton donor role is filled by cysteine 98. FMN-binding positions include lysine 139, 200–202 (NGE), and 224–225 (GR).

Belongs to the Dus family. DusC subfamily. FMN is required as a cofactor.

The enzyme catalyses 5,6-dihydrouridine(16) in tRNA + NADP(+) = uridine(16) in tRNA + NADPH + H(+). It carries out the reaction 5,6-dihydrouridine(16) in tRNA + NAD(+) = uridine(16) in tRNA + NADH + H(+). Catalyzes the synthesis of 5,6-dihydrouridine (D), a modified base found in the D-loop of most tRNAs, via the reduction of the C5-C6 double bond in target uridines. Specifically modifies U16 in tRNAs. The protein is tRNA-dihydrouridine(16) synthase of Pasteurella multocida (strain Pm70).